Here is a 190-residue protein sequence, read N- to C-terminus: Threonylcarbamoyl-AMP synthase (190 aa).

The region spanning 7-190 (GDAIAAAIDV…ALTGELFRQG (184 aa)) is the YrdC-like domain.

The protein belongs to the SUA5 family. TsaC subfamily.

Its subcellular location is the cytoplasm. The catalysed reaction is L-threonine + hydrogencarbonate + ATP = L-threonylcarbamoyladenylate + diphosphate + H2O. Its function is as follows. Required for the formation of a threonylcarbamoyl group on adenosine at position 37 (t(6)A37) in tRNAs that read codons beginning with adenine. Catalyzes the conversion of L-threonine, HCO(3)(-)/CO(2) and ATP to give threonylcarbamoyl-AMP (TC-AMP) as the acyladenylate intermediate, with the release of diphosphate. The polypeptide is Threonylcarbamoyl-AMP synthase (Escherichia coli O157:H7).